A 218-amino-acid polypeptide reads, in one-letter code: MLGGTFDPIHDGHLALARRFAELLDLTELVLLPAGQPYQKRDVSAAEHRLAMTRAAAGTLSVPGVTVTVATDEIEHTGPTYTVETLARWRERIGPDASLSLLIGADQLVRLDTWRDWRTLFDYAHIGVSTRPGFELGAAPPDVAREIAARQARADVLKATPAGRLLIDTTLSFDIAATDIRAHLRECIARHAQMPDASAEHVPAAVWAYILQHRLYHS.

This sequence belongs to the NadD family.

The enzyme catalyses nicotinate beta-D-ribonucleotide + ATP + H(+) = deamido-NAD(+) + diphosphate. Its pathway is cofactor biosynthesis; NAD(+) biosynthesis; deamido-NAD(+) from nicotinate D-ribonucleotide: step 1/1. Functionally, catalyzes the reversible adenylation of nicotinate mononucleotide (NaMN) to nicotinic acid adenine dinucleotide (NaAD). The sequence is that of Probable nicotinate-nucleotide adenylyltransferase from Burkholderia cenocepacia (strain ATCC BAA-245 / DSM 16553 / LMG 16656 / NCTC 13227 / J2315 / CF5610) (Burkholderia cepacia (strain J2315)).